Reading from the N-terminus, the 137-residue chain is Protein PsiE homolog (137 aa).

4 helical membrane passes run 13-35, 55-77, 84-103, and 107-129; these read ILLR…AFLI, YYMT…IVKY, FPLR…FIIV, and SATS…FLAN.

Belongs to the PsiE family.

It is found in the cell membrane. The sequence is that of Protein PsiE homolog from Listeria monocytogenes serotype 4b (strain F2365).